The chain runs to 216 residues: Uracil phosphoribosyltransferase (216 aa).

Residues R85, R110, and 136–144 (DPMLATGNS) contribute to the 5-phospho-alpha-D-ribose 1-diphosphate site. Uracil is bound by residues I201 and 206-208 (GDA). D207 contributes to the 5-phospho-alpha-D-ribose 1-diphosphate binding site.

The protein belongs to the UPRTase family. The cofactor is Mg(2+).

The catalysed reaction is UMP + diphosphate = 5-phospho-alpha-D-ribose 1-diphosphate + uracil. It functions in the pathway pyrimidine metabolism; UMP biosynthesis via salvage pathway; UMP from uracil: step 1/1. With respect to regulation, allosterically activated by GTP. Catalyzes the conversion of uracil and 5-phospho-alpha-D-ribose 1-diphosphate (PRPP) to UMP and diphosphate. This Rhodospirillum centenum (strain ATCC 51521 / SW) protein is Uracil phosphoribosyltransferase.